The primary structure comprises 162 residues: Shikimate kinase (162 aa).

Residue 10 to 15 (GAGKST) participates in ATP binding. Residue Ser-14 coordinates Mg(2+). Substrate is bound by residues Asp-28, Arg-52, and Gly-73. Arg-113 lines the ATP pocket. Arg-129 contacts substrate.

Belongs to the shikimate kinase family. As to quaternary structure, monomer. It depends on Mg(2+) as a cofactor.

Its subcellular location is the cytoplasm. It catalyses the reaction shikimate + ATP = 3-phosphoshikimate + ADP + H(+). The protein operates within metabolic intermediate biosynthesis; chorismate biosynthesis; chorismate from D-erythrose 4-phosphate and phosphoenolpyruvate: step 5/7. Its function is as follows. Catalyzes the specific phosphorylation of the 3-hydroxyl group of shikimic acid using ATP as a cosubstrate. The chain is Shikimate kinase from Lactococcus lactis subsp. cremoris (strain MG1363).